The primary structure comprises 515 residues: Ribosome assembly protein 4 (515 aa).

The interval 20-128 (REVAIIPKDL…LLYTPRAVFK (109 aa)) is interaction with MDN1. A ubiquitin-like (UBL) domain region spans residues 29–125 (LPNVSIKFQA…QITLLYTPRA (97 aa)). WD repeat units lie at residues 141-181 (GHGS…PMHT), 184-223 (GHYN…CLGD), 227-273 (GHSK…CQYT), 276-314 (GHTN…RCIN), 352-396 (AQKK…KPIA), 400-439 (GHQK…FIST), 442-481 (GHVA…LSVD), and 484-515 (GHKD…LWTH).

This sequence belongs to the NLE1/RSA4 family. As to quaternary structure, associates with the pre-60S ribosomal particle. Interacts (via WD repeats) with uL18 (RPL5). Interacts (via UBL domain) with MDN1 (via VWFA/MIDAS domain). Interacts (via WD repeats) with NSA2.

It is found in the nucleus. The protein localises to the nucleolus. Its function is as follows. Involved in ribosome biogenesis. Required for processing and efficient intra-nuclear transport of pre-60S ribosomal subunits. Interacts with the AAA-ATPase Midasin (MDN1/REA1), which is essential for the ATP-dependent dissociation of a group of nonribosomal factors from the pre-60S particle. This chain is Ribosome assembly protein 4, found in Saccharomyces cerevisiae (strain ATCC 204508 / S288c) (Baker's yeast).